The primary structure comprises 86 residues: V-type proton ATPase subunit e (86 aa).

A helical membrane pass occupies residues 1–21 (MGILIPLVSVSAFWAIIGFGG). The Cytoplasmic segment spans residues 22-32 (PWIVPKGPNRG). Residues 33-53 (IIQLMIIMTAVCCWMFWIMVF) form a helical membrane-spanning segment. The Lumenal portion of the chain corresponds to 54–86 (LHQLNPLIGPQINVKTIRWISEKWGDAPNVINN).

Belongs to the V-ATPase e1/e2 subunit family. As to quaternary structure, V-ATPase is a heteromultimeric enzyme made up of two complexes: the ATP-hydrolytic V1 complex and the proton translocation V0 complex. The V1 complex consists of three catalytic AB heterodimers that form a heterohexamer, three peripheral stalks each consisting of EG heterodimers, one central rotor including subunits D and F, and the regulatory subunits C and H. The proton translocation complex V0 consists of the proton transport subunit a, a ring of proteolipid subunits c9c'', rotary subunit d, subunits e and f, and the accessory subunits vah-19/Ac45 and vah-20/PRR.

It localises to the apical cell membrane. Subunit of the V0 complex of vacuolar(H+)-ATPase (V-ATPase), a multisubunit enzyme composed of a peripheral complex (V1) that hydrolyzes ATP and a membrane integral complex (V0) that translocates protons. V-ATPase is responsible for acidifying and maintaining the pH of intracellular compartments and in some cell types, is targeted to the plasma membrane, where it is responsible for acidifying the extracellular environment. During embryonic development, the V-ATPase is required to repress fusion of epidermal cells probably by negatively regulating eff-1-mediated cell fusion. In Caenorhabditis elegans, this protein is V-type proton ATPase subunit e.